We begin with the raw amino-acid sequence, 1009 residues long: Dihydropyrimidine dehydrogenase [NADP(+)] (1009 aa).

One can recognise a 4Fe-4S ferredoxin-type 1 domain in the interval arginine 69–phenylalanine 99. Positions 78, 81, 86, and 90 each coordinate [4Fe-4S] cluster. Position 128 (valine 128) interacts with FAD. Residues cysteine 129, cysteine 135, cysteine 139, and glutamine 155 each contribute to the [4Fe-4S] cluster site. FAD-binding positions include glycine 193–threonine 197, glutamate 217–leucine 225, arginine 234, and leucine 260. NADP(+) contacts are provided by residues alanine 339 to threonine 342, arginine 363 to arginine 364, arginine 370, alanine 436 to glycine 438, and aspartate 479 to glycine 484. Residue glycine 478–threonine 486 coordinates FAD. FMN-binding positions include serine 548 and lysine 572–threonine 573. Substrate is bound by residues asparagine 607 and asparagine 666–serine 668. Residue cysteine 669 is the Proton acceptor of the active site. Lysine 707 provides a ligand contact to FMN. Asparagine 734–threonine 735 lines the substrate pocket. Residues glycine 765, threonine 791–glycine 793, and cysteine 814–serine 815 contribute to the FMN site. 2 4Fe-4S ferredoxin-type domains span residues valine 932–lysine 964 and threonine 965–arginine 995. 8 residues coordinate [4Fe-4S] cluster: cysteine 941, cysteine 944, cysteine 947, cysteine 951, cysteine 974, cysteine 977, cysteine 980, and cysteine 984.

This sequence belongs to the dihydropyrimidine dehydrogenase family. In terms of assembly, homodimer. It depends on [4Fe-4S] cluster as a cofactor. The cofactor is FAD. Requires FMN as cofactor.

The protein localises to the cytoplasm. The enzyme catalyses 5,6-dihydrouracil + NADP(+) = uracil + NADPH + H(+). It participates in amino-acid biosynthesis; beta-alanine biosynthesis. Functionally, involved in pyrimidine base degradation. Catalyzes the reduction of uracil and thymine. The chain is Dihydropyrimidine dehydrogenase [NADP(+)] (pyd1) from Dictyostelium discoideum (Social amoeba).